We begin with the raw amino-acid sequence, 211 residues long: ATP phosphoribosyltransferase (211 aa).

It belongs to the ATP phosphoribosyltransferase family. Short subfamily. As to quaternary structure, heteromultimer composed of HisG and HisZ subunits.

The protein localises to the cytoplasm. It carries out the reaction 1-(5-phospho-beta-D-ribosyl)-ATP + diphosphate = 5-phospho-alpha-D-ribose 1-diphosphate + ATP. The protein operates within amino-acid biosynthesis; L-histidine biosynthesis; L-histidine from 5-phospho-alpha-D-ribose 1-diphosphate: step 1/9. Its function is as follows. Catalyzes the condensation of ATP and 5-phosphoribose 1-diphosphate to form N'-(5'-phosphoribosyl)-ATP (PR-ATP). Has a crucial role in the pathway because the rate of histidine biosynthesis seems to be controlled primarily by regulation of HisG enzymatic activity. This is ATP phosphoribosyltransferase from Pseudomonas putida (strain GB-1).